Here is a 184-residue protein sequence, read N- to C-terminus: MNALQKFHHFFNCCIGAWHTERTYHYLDRGEVERSRTDFTIRTLTPELKEKVLADNNYPNHGVDGFLGFHLAFETVSEKGEEAGQELNMLFVPRREGPRGLEGDYLRDRAYEEDRPIVASFRFDPGSLQLVMTTTYTRVVAVDTITLLNPRLRLRQILTYQRPPHGQPLEELLLVGFGVEQKLT.

The protein belongs to the CpcS/CpeS biliprotein lyase family.

Its function is as follows. Covalently attaches a chromophore to Cys residue(s) of phycobiliproteins. This chain is Chromophore lyase CpcS/CpeS 1, found in Synechococcus sp. (strain JA-3-3Ab) (Cyanobacteria bacterium Yellowstone A-Prime).